A 913-amino-acid polypeptide reads, in one-letter code: Protein SEY1 homolog (913 aa).

Topologically, residues 1–825 (MTDVNKTQII…ETGGHMSLKN (825 aa)) are cytoplasmic. In terms of domain architecture, GB1/RHD3-type G spans 33–288 (GFNYNVIAIL…IPADGFAQYC (256 aa)). 43-50 (GSQSSGKS) serves as a coordination point for GTP. A helical transmembrane segment spans residues 826-846 (VPFAFWVILLILGWNEILMFT). Over 847–849 (RLF) the chain is Lumenal. The helical transmembrane segment at 850 to 870 (FRLNIILPMLIGFIIIVISCL) threads the bilayer. Residues 871 to 913 (YTGNAQILSYINKIIFIVIKNLYNFYKHLQTIGHQTTKPEKVE) are Cytoplasmic-facing.

The protein belongs to the TRAFAC class dynamin-like GTPase superfamily. GB1/RHD3 GTPase family. RHD3 subfamily.

It localises to the endoplasmic reticulum membrane. Its function is as follows. Probable GTP-binding protein involved in generating and maintaining the structure of the tubular endoplasmic reticulum network. The sequence is that of Protein SEY1 homolog from Plasmodium berghei (strain Anka).